The sequence spans 397 residues: Argininosuccinate synthase (397 aa).

ATP is bound at residue A9–S17. Y87 lines the L-citrulline pocket. G117 is an ATP binding site. L-aspartate is bound by residues T119, N123, and D124. An L-citrulline-binding site is contributed by N123. Residues R127, S175, S184, E260, and Y272 each coordinate L-citrulline.

The protein belongs to the argininosuccinate synthase family. Type 1 subfamily. In terms of assembly, homotetramer.

The protein localises to the cytoplasm. It carries out the reaction L-citrulline + L-aspartate + ATP = 2-(N(omega)-L-arginino)succinate + AMP + diphosphate + H(+). It participates in amino-acid biosynthesis; L-arginine biosynthesis; L-arginine from L-ornithine and carbamoyl phosphate: step 2/3. This is Argininosuccinate synthase from Methanococcus maripaludis (strain DSM 14266 / JCM 13030 / NBRC 101832 / S2 / LL).